Consider the following 124-residue polypeptide: Histone H2A (124 aa).

Over residues 1–18 (MSGRGKGGKAKGKSKSRS) the composition is skewed to basic residues. Residues 1 to 23 (MSGRGKGGKAKGKSKSRSSRAGL) are disordered. Residue Ser2 is modified to N-acetylserine. Phosphoserine is present on Ser2. Gln104 carries the N5-methylglutamine modification.

Belongs to the histone H2A family. As to quaternary structure, the nucleosome is a histone octamer containing two molecules each of H2A, H2B, H3 and H4 assembled in one H3-H4 heterotetramer and two H2A-H2B heterodimers. The octamer wraps approximately 147 bp of DNA. The N-terminal serine is acetylated. That serine is also phosphorylated in approximately 60% of the molecules isolated from erythrocytes.

It is found in the nucleus. Its subcellular location is the chromosome. Core component of nucleosome. Nucleosomes wrap and compact DNA into chromatin, limiting DNA accessibility to the cellular machineries which require DNA as a template. Histones thereby play a central role in transcription regulation, DNA repair, DNA replication and chromosomal stability. DNA accessibility is regulated via a complex set of post-translational modifications of histones, also called histone code, and nucleosome remodeling. This Sipunculus nudus (Sipunculan worm) protein is Histone H2A.